Here is a 371-residue protein sequence, read N- to C-terminus: Isopentenyl-diphosphate delta-isomerase (371 aa).

A substrate-binding site is contributed by 9 to 10; it reads RK. FMN is bound by residues Thr-66, 67–69, Ser-100, and Asn-128; that span reads GMT. 100 to 102 serves as a coordination point for substrate; it reads SQR. Gln-167 lines the substrate pocket. Glu-168 serves as a coordination point for Mg(2+). FMN contacts are provided by residues Lys-199, Ser-224, Thr-229, 278–280, and 299–300; these read GMR and AL.

Belongs to the IPP isomerase type 2 family. As to quaternary structure, homooctamer. Dimer of tetramers. Requires FMN as cofactor. NADPH serves as cofactor. It depends on Mg(2+) as a cofactor.

It localises to the cytoplasm. It carries out the reaction isopentenyl diphosphate = dimethylallyl diphosphate. Its function is as follows. Involved in the biosynthesis of isoprenoids. Catalyzes the 1,3-allylic rearrangement of the homoallylic substrate isopentenyl (IPP) to its allylic isomer, dimethylallyl diphosphate (DMAPP). The polypeptide is Isopentenyl-diphosphate delta-isomerase (Pyrococcus horikoshii (strain ATCC 700860 / DSM 12428 / JCM 9974 / NBRC 100139 / OT-3)).